We begin with the raw amino-acid sequence, 115 residues long: Large ribosomal subunit protein bL20 (115 aa).

The protein belongs to the bacterial ribosomal protein bL20 family.

Its function is as follows. Binds directly to 23S ribosomal RNA and is necessary for the in vitro assembly process of the 50S ribosomal subunit. It is not involved in the protein synthesizing functions of that subunit. In Malacoplasma penetrans (strain HF-2) (Mycoplasma penetrans), this protein is Large ribosomal subunit protein bL20.